The sequence spans 331 residues: Glucokinase (331 aa).

ATP is bound at residue 14 to 19 (GDIGGT).

It belongs to the bacterial glucokinase family.

The protein localises to the cytoplasm. The enzyme catalyses D-glucose + ATP = D-glucose 6-phosphate + ADP + H(+). This Aromatoleum aromaticum (strain DSM 19018 / LMG 30748 / EbN1) (Azoarcus sp. (strain EbN1)) protein is Glucokinase.